Here is a 332-residue protein sequence, read N- to C-terminus: Holliday junction branch migration complex subunit RuvB (332 aa).

The tract at residues 1–182 (MKLNKNSELK…FGLILKLNYY (182 aa)) is large ATPase domain (RuvB-L). Residues L21, R22, G63, K66, T67, T68, 129–131 (EDY), R172, Y182, and R219 contribute to the ATP site. A Mg(2+)-binding site is contributed by T67. The small ATPAse domain (RuvB-S) stretch occupies residues 183-253 (SEDELELIIK…ISEIALEKLT (71 aa)). Residues 256 to 332 (KNGLDDADYT…FKLFKNDKIK (77 aa)) are head domain (RuvB-H). 2 residues coordinate DNA: R311 and R316.

The protein belongs to the RuvB family. As to quaternary structure, homohexamer. Forms an RuvA(8)-RuvB(12)-Holliday junction (HJ) complex. HJ DNA is sandwiched between 2 RuvA tetramers; dsDNA enters through RuvA and exits via RuvB. An RuvB hexamer assembles on each DNA strand where it exits the tetramer. Each RuvB hexamer is contacted by two RuvA subunits (via domain III) on 2 adjacent RuvB subunits; this complex drives branch migration. In the full resolvosome a probable DNA-RuvA(4)-RuvB(12)-RuvC(2) complex forms which resolves the HJ.

It localises to the cytoplasm. The catalysed reaction is ATP + H2O = ADP + phosphate + H(+). Functionally, the RuvA-RuvB-RuvC complex processes Holliday junction (HJ) DNA during genetic recombination and DNA repair, while the RuvA-RuvB complex plays an important role in the rescue of blocked DNA replication forks via replication fork reversal (RFR). RuvA specifically binds to HJ cruciform DNA, conferring on it an open structure. The RuvB hexamer acts as an ATP-dependent pump, pulling dsDNA into and through the RuvAB complex. RuvB forms 2 homohexamers on either side of HJ DNA bound by 1 or 2 RuvA tetramers; 4 subunits per hexamer contact DNA at a time. Coordinated motions by a converter formed by DNA-disengaged RuvB subunits stimulates ATP hydrolysis and nucleotide exchange. Immobilization of the converter enables RuvB to convert the ATP-contained energy into a lever motion, pulling 2 nucleotides of DNA out of the RuvA tetramer per ATP hydrolyzed, thus driving DNA branch migration. The RuvB motors rotate together with the DNA substrate, which together with the progressing nucleotide cycle form the mechanistic basis for DNA recombination by continuous HJ branch migration. Branch migration allows RuvC to scan DNA until it finds its consensus sequence, where it cleaves and resolves cruciform DNA. This Phytoplasma mali (strain AT) protein is Holliday junction branch migration complex subunit RuvB.